A 1018-amino-acid polypeptide reads, in one-letter code: Serine/threonine-protein phosphatase BSL2 (1018 aa).

Residues 1–75 form a disordered region; sequence MDEDSSMVAD…AAAVVGQEQQ (75 aa). Residues 41–57 show a composition bias toward pro residues; that stretch reads SPPPEGGSVPTPPPSDP. Low complexity predominate over residues 63–75; sequence QQQAAAVVGQEQQ. 5 Kelch repeats span residues 149 to 195, 253 to 301, 306 to 356, 362 to 409, and 430 to 479; these read TSAG…VATA, YLMA…TASA, LLLL…VFVN, SGGA…DAAG, and LIFI…RLPG. The segment at 569–590 is disordered; sequence DRDCGAEATPSGKPTFSLIKPD. A Phosphoserine modification is found at serine 627. Residues aspartate 720, histidine 722, aspartate 754, and asparagine 786 each coordinate Mn(2+). The Proton donor role is filled by histidine 787. Mn(2+) contacts are provided by histidine 839 and histidine 918. Position 975 is a phosphoserine (serine 975). Residues 994–1011 show a composition bias toward polar residues; it reads ANRPATPTRGRPQNSNDR. The interval 994-1018 is disordered; sequence ANRPATPTRGRPQNSNDRGGSLAWM.

Belongs to the PPP phosphatase family. BSU subfamily. Interacts with BSK8. Mn(2+) is required as a cofactor. As to expression, expressed throughout the plant, with a higher level in younger parts.

Its subcellular location is the cytoplasm. It is found in the cell membrane. The protein resides in the nucleus. It catalyses the reaction O-phospho-L-seryl-[protein] + H2O = L-seryl-[protein] + phosphate. The catalysed reaction is O-phospho-L-threonyl-[protein] + H2O = L-threonyl-[protein] + phosphate. Functionally, phosphatase involved in elongation process, probably by acting as a regulator of brassinolide signaling. The polypeptide is Serine/threonine-protein phosphatase BSL2 (BSL2) (Arabidopsis thaliana (Mouse-ear cress)).